The primary structure comprises 917 residues: Autophagy-related protein 9 (917 aa).

Topologically, residues 1 to 226 are cytoplasmic; that stretch reads MASNIFSRLV…AGFWCIIVQR (226 aa). 2 disordered regions span residues 16–37 and 119–177; these read RSFY…RAGI and LLLS…QGRP. The chain crosses the membrane as a helical span at residues 227 to 247; sequence ILELVNAAFVAVFLTFLSQCV. The Lumenal segment spans residues 248 to 275; sequence DYHKLPHSKKMEDIIIPKCTQNMSLVWN. Asparagine 269 carries an N-linked (GlcNAc...) asparagine glycan. A helical membrane pass occupies residues 276-296; that stretch reads VGLWLFAIYFICRCFGLIIQL. At 297–442 the chain is on the cytoplasmic side; that stretch reads RQLKHLRDFY…RQLSQKLKSR (146 aa). The stretch at 443–463 is an intramembrane region; that stretch reads FFFAGLMIFVMSPFIALYLIL. The Cytoplasmic portion of the chain corresponds to 464–539; sequence VYFLTYFHEF…ARTVSFITGS (76 aa). A helical membrane pass occupies residues 540–560; that stretch reads IVAVLGLATIFDSEAFLTFEI. Residues 561–564 are Lumenal-facing; that stretch reads TPDR. The helical transmembrane segment at 565–585 threads the bilayer; the sequence is SVLFYVSILATLWAVARGNIS. At 586–633 the chain is on the cytoplasmic side; the sequence is DDNEVYDPEFAMKSIIEFTHYEPDHWRGRLHSTEVKNEFSELYKPRPQ. N6-acetyllysine is present on lysine 621. Residues 634 to 654 lie within the membrane without spanning it; sequence IFLEEILSILLTPLVLLVSLP. The Cytoplasmic portion of the chain corresponds to 655 to 917; that stretch reads NSTDQIVDFF…FQQAHMHLRR (263 aa). The tract at residues 854–895 is disordered; the sequence is DARFGKLGDEDIDESGGALDESTWQTSPTKTLSRENSGANPQ. Positions 875–895 are enriched in polar residues; that stretch reads STWQTSPTKTLSRENSGANPQ.

This sequence belongs to the ATG9 family. In terms of assembly, homotrimer; forms a homotrimer with a central pore that forms a path between the two membrane leaflets. Interacts with HAT1. Acetylated by HAT1 at Lys-621, which increases the ability to bind vesicles during nutrient starvation induction. Post-translationally, phosphorylated by ATG1. ATG1 phosphorylation is required for preautophagosome elongation.

The protein localises to the preautophagosomal structure membrane. It is found in the cytoplasmic vesicle membrane. Its subcellular location is the vacuole membrane. The protein resides in the golgi apparatus membrane. It localises to the endoplasmic reticulum membrane. It carries out the reaction a 1,2-diacyl-sn-glycero-3-phosphocholine(in) = a 1,2-diacyl-sn-glycero-3-phosphocholine(out). The enzyme catalyses a 1,2-diacyl-sn-glycero-3-phospho-L-serine(in) = a 1,2-diacyl-sn-glycero-3-phospho-L-serine(out). The catalysed reaction is a 1,2-diacyl-sn-glycero-3-phosphoethanolamine(in) = a 1,2-diacyl-sn-glycero-3-phosphoethanolamine(out). It catalyses the reaction a 1,2-diacyl-sn-glycero-3-phospho-(1D-myo-inositol-3-phosphate)(in) = a 1,2-diacyl-sn-glycero-3-phospho-(1D-myo-inositol-3-phosphate)(out). Its function is as follows. Phospholipid scramblase involved in autophagy and cytoplasm to vacuole transport (Cvt) vesicle formation. Cycles between the preautophagosomal structure/phagophore assembly site (PAS) and the cytoplasmic vesicle pool and supplies membrane for the growing autophagosome. Lipid scramblase activity plays a key role in preautophagosomal structure/phagophore assembly by distributing the phospholipids that arrive through ATG2 from the cytoplasmic to the luminal leaflet of the bilayer, thereby driving autophagosomal membrane expansion. Required for mitophagy. Also involved in endoplasmic reticulum-specific autophagic process and is essential for the survival of cells subjected to severe ER stress. Different machineries are required for anterograde trafficking to the PAS during either the Cvt pathway or bulk autophagy and for retrograde trafficking. Plays a role in appressorium formation and pathogenicity. This chain is Autophagy-related protein 9, found in Pyricularia oryzae (strain 70-15 / ATCC MYA-4617 / FGSC 8958) (Rice blast fungus).